Consider the following 482-residue polypeptide: tRNA sulfurtransferase (482 aa).

Residues L61–R165 enclose the THUMP domain. ATP contacts are provided by residues L183–I184, K265, G287, and Q296. C344 and C456 are disulfide-bonded. In terms of domain architecture, Rhodanese spans F404–P482. The active-site Cysteine persulfide intermediate is C456.

The protein belongs to the ThiI family.

It is found in the cytoplasm. The enzyme catalyses [ThiI sulfur-carrier protein]-S-sulfanyl-L-cysteine + a uridine in tRNA + 2 reduced [2Fe-2S]-[ferredoxin] + ATP + H(+) = [ThiI sulfur-carrier protein]-L-cysteine + a 4-thiouridine in tRNA + 2 oxidized [2Fe-2S]-[ferredoxin] + AMP + diphosphate. It carries out the reaction [ThiS sulfur-carrier protein]-C-terminal Gly-Gly-AMP + S-sulfanyl-L-cysteinyl-[cysteine desulfurase] + AH2 = [ThiS sulfur-carrier protein]-C-terminal-Gly-aminoethanethioate + L-cysteinyl-[cysteine desulfurase] + A + AMP + 2 H(+). Its pathway is cofactor biosynthesis; thiamine diphosphate biosynthesis. In terms of biological role, catalyzes the ATP-dependent transfer of a sulfur to tRNA to produce 4-thiouridine in position 8 of tRNAs, which functions as a near-UV photosensor. Also catalyzes the transfer of sulfur to the sulfur carrier protein ThiS, forming ThiS-thiocarboxylate. This is a step in the synthesis of thiazole, in the thiamine biosynthesis pathway. The sulfur is donated as persulfide by IscS. The polypeptide is tRNA sulfurtransferase (Escherichia coli O127:H6 (strain E2348/69 / EPEC)).